We begin with the raw amino-acid sequence, 698 residues long: Elongation factor G 1 (698 aa).

The tr-type G domain occupies 8 to 290 (ERYRNIGIVA…AVVDFLPAPI (283 aa)). GTP is bound by residues 17–24 (AHVDAGKT), 88–92 (DTPGH), and 142–145 (NKMD).

It belongs to the TRAFAC class translation factor GTPase superfamily. Classic translation factor GTPase family. EF-G/EF-2 subfamily.

The protein resides in the cytoplasm. Catalyzes the GTP-dependent ribosomal translocation step during translation elongation. During this step, the ribosome changes from the pre-translocational (PRE) to the post-translocational (POST) state as the newly formed A-site-bound peptidyl-tRNA and P-site-bound deacylated tRNA move to the P and E sites, respectively. Catalyzes the coordinated movement of the two tRNA molecules, the mRNA and conformational changes in the ribosome. The chain is Elongation factor G 1 from Shewanella frigidimarina (strain NCIMB 400).